The chain runs to 113 residues: Dolichyl-diphosphooligosaccharide--protein glycosyltransferase subunit DAD1 (113 aa).

N-acetylserine is present on Ser2. The Cytoplasmic portion of the chain corresponds to 2–30 (SASVLSVISRFLEEYLSSTPQRLKLLDAY). The helical transmembrane segment at 31–51 (LLYILLTGALQFGYCLLVGTF) threads the bilayer. Residue Pro52 is a topological domain, lumenal. A helical transmembrane segment spans residues 53–73 (FNSFLSGFISCVGSFILAVCL). The Cytoplasmic portion of the chain corresponds to 74-92 (RIQINPQNKADFQGISPER). Residues 93 to 113 (AFADFLFASTILHLVVMNFVG) form a helical membrane-spanning segment.

This sequence belongs to the DAD/OST2 family. As to quaternary structure, component of the oligosaccharyltransferase (OST) complex. OST exists in two different complex forms which contain common core subunits RPN1, RPN2, OST48, OST4, DAD1 and TMEM258, either STT3A or STT3B as catalytic subunits, and form-specific accessory subunits. STT3A complex assembly occurs through the formation of 3 subcomplexes. Subcomplex 1 contains RPN1 and TMEM258, subcomplex 2 contains the STT3A-specific subunits STT3A, DC2/OSTC, and KCP2 as well as the core subunit OST4, and subcomplex 3 contains RPN2, DAD1, and OST48. The STT3A complex can form stable complexes with the Sec61 complex or with both the Sec61 and TRAP complexes.

It localises to the endoplasmic reticulum membrane. It functions in the pathway protein modification; protein glycosylation. Its function is as follows. Subunit of the oligosaccharyl transferase (OST) complex that catalyzes the initial transfer of a defined glycan (Glc(3)Man(9)GlcNAc(2) in eukaryotes) from the lipid carrier dolichol-pyrophosphate to an asparagine residue within an Asn-X-Ser/Thr consensus motif in nascent polypeptide chains, the first step in protein N-glycosylation. N-glycosylation occurs cotranslationally and the complex associates with the Sec61 complex at the channel-forming translocon complex that mediates protein translocation across the endoplasmic reticulum (ER). All subunits are required for a maximal enzyme activity. The protein is Dolichyl-diphosphooligosaccharide--protein glycosyltransferase subunit DAD1 of Sus scrofa (Pig).